The primary structure comprises 500 residues: Protein gar2 (500 aa).

Composition is skewed to basic and acidic residues over residues 1-41 (MAKK…KEIA) and 59-68 (KRASSPEPSK). The segment at 1-262 (MAKKDKTSVK…TKPSQDSNET (262 aa)) is disordered. The span at 69–78 (KSVKKQKKSK) shows a compositional bias: basic residues. Low complexity predominate over residues 90–120 (ESSSSESESSSSESESSSSESESSSSESSSS). A compositionally biased stretch (basic and acidic residues) spans 126–137 (VIVKTEEKKESS). Phosphoserine occurs at positions 143, 144, and 146. The segment covering 152 to 163 (AVVKIEEKKESS) has biased composition (basic and acidic residues). Low complexity predominate over residues 164-182 (SDSSSESSSSESESESSSS). Over residues 191–201 (VEKTEEKKEGS) the composition is skewed to basic and acidic residues. Residues 202–218 (SESSSDSESSSDSSSES) show a composition bias toward low complexity. Positions 219–233 (GDSDSSSDSESESSS) are enriched in acidic residues. A compositionally biased stretch (basic and acidic residues) spans 234–250 (EDEKKRKAEPASEERPA). RRM domains follow at residues 263–341 (CTVF…LSNP) and 366–443 (DTVF…FSTP). Residues 441 to 500 (STPRTGGGSRGGRGGFGGRGGFGGRGGFGGGRGRGRGGARSGNPNRGSVAPFSGNKVTFD) are disordered. Positions 445-480 (TGGGSRGGRGGFGGRGGFGGRGGFGGGRGRGRGGAR) are enriched in gly residues.

Belongs to the RRM GAR family.

It is found in the nucleus. The protein resides in the nucleolus. In terms of biological role, helps the assembly of pre-ribosomal particles containing 18S rRNA. The chain is Protein gar2 (gar2) from Schizosaccharomyces pombe (strain 972 / ATCC 24843) (Fission yeast).